Consider the following 134-residue polypeptide: Cytochrome b (134 aa).

Helical transmembrane passes span 33–53 (FGSL…FLAM), 77–98 (WVLR…YVHV), and 113–133 (WNVG…GYVL). Histidine 83 and histidine 97 together coordinate heme b.

This sequence belongs to the cytochrome b family. In terms of assembly, the cytochrome bc1 complex contains 11 subunits: 3 respiratory subunits (MT-CYB, CYC1 and UQCRFS1), 2 core proteins (UQCRC1 and UQCRC2) and 6 low-molecular weight proteins (UQCRH/QCR6, UQCRB/QCR7, UQCRQ/QCR8, UQCR10/QCR9, UQCR11/QCR10 and a cleavage product of UQCRFS1). This cytochrome bc1 complex then forms a dimer. It depends on heme b as a cofactor.

It is found in the mitochondrion inner membrane. Functionally, component of the ubiquinol-cytochrome c reductase complex (complex III or cytochrome b-c1 complex) that is part of the mitochondrial respiratory chain. The b-c1 complex mediates electron transfer from ubiquinol to cytochrome c. Contributes to the generation of a proton gradient across the mitochondrial membrane that is then used for ATP synthesis. This chain is Cytochrome b (MT-CYB), found in Anoura caudifer (Hairy-legged long-tongued bat).